We begin with the raw amino-acid sequence, 97 residues long: Co-chaperonin GroES (97 aa).

It belongs to the GroES chaperonin family. In terms of assembly, heptamer of 7 subunits arranged in a ring. Interacts with the chaperonin GroEL.

The protein localises to the cytoplasm. In terms of biological role, together with the chaperonin GroEL, plays an essential role in assisting protein folding. The GroEL-GroES system forms a nano-cage that allows encapsulation of the non-native substrate proteins and provides a physical environment optimized to promote and accelerate protein folding. GroES binds to the apical surface of the GroEL ring, thereby capping the opening of the GroEL channel. This is Co-chaperonin GroES from Escherichia fergusonii (strain ATCC 35469 / DSM 13698 / CCUG 18766 / IAM 14443 / JCM 21226 / LMG 7866 / NBRC 102419 / NCTC 12128 / CDC 0568-73).